The primary structure comprises 413 residues: MENMLLWLIFFTPGWTLIDGSEMEWDFMWHLRKVPRIVSERTFHLTSPAFEADAKMMVNTVCGIECQKELPTPSLSELEDYLSYETVFENGTRTLTRVKVQDLVLEPTQNITTKGVSVRRKRQVYGTDSRFSILDKRFLTNFPFSTAVKLSTGCSGILISPQHVLTAAHCVHDGKDYVKGSKKLRVGLLKMRNKSGGKKRRGSKRSRREASGGDQREGTREHLRERAKGGRRRKKSGRGQRIAEGRPSFQWTRVKNTHIPKGWARGGMGDATLDYDYALLELKRAHKKKYMELGISPTIKKMPGGMIHFSGFDNDRADQLVYRFCSVSDESNDLLYQYCDAESGSTGSGVYLRLKDPDKKNWKRKIIAVYSGHQWVDVHGVQKDYNVAVRITPLKYAQICLWIHGNDANCAYG.

The N-terminal stretch at 1-16 (MENMLLWLIFFTPGWT) is a signal peptide. Asn90 is a glycosylation site (N-linked (GlcNAc...) asparagine). One can recognise a Peptidase S1 domain in the interval 124-408 (VYGTDSRFSI…ICLWIHGNDA (285 aa)). Cys154 and Cys170 are oxidised to a cystine. A compositionally biased stretch (basic residues) spans 191–207 (MRNKSGGKKRRGSKRSR). The segment at 191 to 250 (MRNKSGGKKRRGSKRSRREASGGDQREGTREHLRERAKGGRRRKKSGRGQRIAEGRPSFQ) is disordered. Over residues 208 to 228 (REASGGDQREGTREHLRERAK) the composition is skewed to basic and acidic residues. The span at 229–238 (GGRRRKKSGR) shows a compositional bias: basic residues.

It belongs to the peptidase S1 family.

It is found in the secreted. The sequence is that of Inactive serine protease 35 (PRSS35) from Homo sapiens (Human).